The chain runs to 397 residues: Elongation factor Tu 1 (397 aa).

The region spanning 10–207 (KPHVNVGTIG…TLDSYIPEPV (198 aa)) is the tr-type G domain. The G1 stretch occupies residues 19 to 26 (GHVDHGKT). 19-26 (GHVDHGKT) contributes to the GTP binding site. Thr26 lines the Mg(2+) pocket. Positions 60–64 (GITIN) are G2. Positions 81–84 (DCPG) are G3. GTP contacts are provided by residues 81–85 (DCPGH) and 136–139 (NKAD). The segment at 136-139 (NKAD) is G4. Positions 174–176 (SAL) are G5.

It belongs to the TRAFAC class translation factor GTPase superfamily. Classic translation factor GTPase family. EF-Tu/EF-1A subfamily. In terms of assembly, monomer.

It localises to the cytoplasm. The catalysed reaction is GTP + H2O = GDP + phosphate + H(+). Functionally, GTP hydrolase that promotes the GTP-dependent binding of aminoacyl-tRNA to the A-site of ribosomes during protein biosynthesis. The polypeptide is Elongation factor Tu 1 (Stutzerimonas stutzeri (strain A1501) (Pseudomonas stutzeri)).